A 522-amino-acid chain; its full sequence is UPF0288 protein MTH_1865 (522 aa).

The protein belongs to the UPF0288 family.

This is UPF0288 protein MTH_1865 from Methanothermobacter thermautotrophicus (strain ATCC 29096 / DSM 1053 / JCM 10044 / NBRC 100330 / Delta H) (Methanobacterium thermoautotrophicum).